We begin with the raw amino-acid sequence, 126 residues long: Large ribosomal subunit protein bL17 (126 aa).

It belongs to the bacterial ribosomal protein bL17 family. Part of the 50S ribosomal subunit. Contacts protein L32.

This Aliivibrio fischeri (strain ATCC 700601 / ES114) (Vibrio fischeri) protein is Large ribosomal subunit protein bL17.